Reading from the N-terminus, the 335-residue chain is Adenosine deaminase (335 aa).

Zn(2+) is bound by residues histidine 12 and histidine 14. Residues histidine 14 and aspartate 16 each contribute to the substrate site. Histidine 197 lines the Zn(2+) pocket. Residue glutamate 200 is the Proton donor of the active site. Residue aspartate 278 coordinates Zn(2+).

This sequence belongs to the metallo-dependent hydrolases superfamily. Adenosine and AMP deaminases family. Adenosine deaminase subfamily. The cofactor is Zn(2+).

The enzyme catalyses adenosine + H2O + H(+) = inosine + NH4(+). It catalyses the reaction 2'-deoxyadenosine + H2O + H(+) = 2'-deoxyinosine + NH4(+). Functionally, catalyzes the hydrolytic deamination of adenosine and 2-deoxyadenosine. The sequence is that of Adenosine deaminase from Clostridium botulinum (strain ATCC 19397 / Type A).